The primary structure comprises 457 residues: Argininosuccinate lyase (457 aa).

The protein belongs to the lyase 1 family. Argininosuccinate lyase subfamily.

Its subcellular location is the cytoplasm. It catalyses the reaction 2-(N(omega)-L-arginino)succinate = fumarate + L-arginine. It functions in the pathway amino-acid biosynthesis; L-arginine biosynthesis; L-arginine from L-ornithine and carbamoyl phosphate: step 3/3. In Cronobacter sakazakii (strain ATCC BAA-894) (Enterobacter sakazakii), this protein is Argininosuccinate lyase.